Consider the following 185-residue polypeptide: Peptidyl-tRNA hydrolase (185 aa).

Y14 is a binding site for tRNA. The active-site Proton acceptor is the H19. Y65, N67, and N113 together coordinate tRNA.

It belongs to the PTH family. Monomer.

It localises to the cytoplasm. It catalyses the reaction an N-acyl-L-alpha-aminoacyl-tRNA + H2O = an N-acyl-L-amino acid + a tRNA + H(+). Its function is as follows. Hydrolyzes ribosome-free peptidyl-tRNAs (with 1 or more amino acids incorporated), which drop off the ribosome during protein synthesis, or as a result of ribosome stalling. Catalyzes the release of premature peptidyl moieties from peptidyl-tRNA molecules trapped in stalled 50S ribosomal subunits, and thus maintains levels of free tRNAs and 50S ribosomes. The chain is Peptidyl-tRNA hydrolase from Rickettsia felis (strain ATCC VR-1525 / URRWXCal2) (Rickettsia azadi).